Here is a 259-residue protein sequence, read N- to C-terminus: Dickkopf-related protein 2 (259 aa).

The signal sequence occupies residues methionine 1–alanine 33. Residue asparagine 52 is glycosylated (N-linked (GlcNAc...) asparagine). Residues cysteine 78 to cysteine 127 are DKK-type Cys-1. 5 cysteine pairs are disulfide-bonded: cysteine 183/cysteine 195, cysteine 189/cysteine 204, cysteine 194/cysteine 231, cysteine 214/cysteine 239, and cysteine 233/cysteine 256. The interval cysteine 183–cysteine 256 is DKK-type Cys-2.

This sequence belongs to the dickkopf family. Interacts with LRP5 and LRP6. Post-translationally, may be proteolytically processed by a furin-like protease. Expressed in heart, brain, skeletal muscle and lung.

Its subcellular location is the secreted. Antagonizes canonical Wnt signaling by inhibiting LRP5/6 interaction with Wnt and by forming a ternary complex with the transmembrane protein KREMEN that promotes internalization of LRP5/6. DKKs play an important role in vertebrate development, where they locally inhibit Wnt regulated processes such as antero-posterior axial patterning, limb development, somitogenesis and eye formation. In the adult, Dkks are implicated in bone formation and bone disease, cancer and Alzheimer disease. This is Dickkopf-related protein 2 (DKK2) from Homo sapiens (Human).